We begin with the raw amino-acid sequence, 159 residues long: Ribosomal RNA large subunit methyltransferase H (159 aa).

Residues Leu-76, Gly-108, and 127–132 (FGRLTL) contribute to the S-adenosyl-L-methionine site.

This sequence belongs to the RNA methyltransferase RlmH family. As to quaternary structure, homodimer.

It localises to the cytoplasm. The catalysed reaction is pseudouridine(1915) in 23S rRNA + S-adenosyl-L-methionine = N(3)-methylpseudouridine(1915) in 23S rRNA + S-adenosyl-L-homocysteine + H(+). Specifically methylates the pseudouridine at position 1915 (m3Psi1915) in 23S rRNA. The chain is Ribosomal RNA large subunit methyltransferase H from Streptococcus uberis (strain ATCC BAA-854 / 0140J).